Reading from the N-terminus, the 95-residue chain is Synaptobrevin-A (95 aa).

The Cytoplasmic portion of the chain corresponds to 1–70 (MSEPVNKVKQ…KRLMWCRNIK (70 aa)). The v-SNARE coiled-coil homology domain maps to 7 to 67 (KVKQTQQQVD…NEIKRLMWCR (61 aa)). The chain crosses the membrane as a helical; Anchor for type IV membrane protein span at residues 71–91 (LTLIIIAVVVLLLVVIIVPIV). Topologically, residues 92 to 95 (LKFT) are vesicular.

Belongs to the synaptobrevin family.

The protein resides in the cytoplasmic vesicle. It localises to the secretory vesicle membrane. In terms of biological role, involved in the targeting and/or fusion of transport vesicles to their target membrane. This Dictyostelium discoideum (Social amoeba) protein is Synaptobrevin-A (sybA).